We begin with the raw amino-acid sequence, 356 residues long: C-C chemokine receptor type 8 (356 aa).

Residues 1–35 lie on the Extracellular side of the membrane; it reads MDYTLDPSMTTMTDYYYPDSLSSPCDGELIQRNDK. Residues 36–63 traverse the membrane as a helical segment; the sequence is LLLAVFYCLLFVFSLLGNSLVILVLVVC. Over 64–73 the chain is Cytoplasmic; it reads KKLRNITDIY. The chain crosses the membrane as a helical span at residues 74–93; sequence LLNLALSDLLFVFSFPFQTY. At 94–107 the chain is on the extracellular side; it reads YQLDQWVFGTVMCK. A disulfide bond links Cys106 and Cys184. A helical membrane pass occupies residues 108–129; that stretch reads VVSGFYYIGFYSSMFFITLMSV. Topologically, residues 130 to 146 are cytoplasmic; the sequence is DRYLAVVHAVYAIKVRT. The chain crosses the membrane as a helical span at residues 147–172; sequence IRMGTTTLSLLVWLTAIMATIPLLVF. The Extracellular portion of the chain corresponds to 173-203; it reads YQVASEDGVLQCYSFYNQQTLKWKIFTNFEM. The helical transmembrane segment at 204-223 threads the bilayer; sequence NILGLLIPFTIFMFCYIKIL. The Cytoplasmic portion of the chain corresponds to 224 to 239; sequence HQLKRCQNHNKTKAIR. A helical transmembrane segment spans residues 240–264; it reads LVLIVVIASLLFWVPFNVVLFLTSL. The Extracellular portion of the chain corresponds to 265 to 281; sequence HSMHILDGCSISQQLNY. Residues 282 to 305 form a helical membrane-spanning segment; the sequence is ATHVTEIISFTHCCVNPVIYAFVG. Over 306-356 the chain is Cytoplasmic; that stretch reads EKFKKHLSEIFQKSCSHIFIYLGRQMPRESCEKSSSCQQHSFRSSSIDYIL.

It belongs to the G-protein coupled receptor 1 family.

The protein localises to the cell membrane. Its function is as follows. Receptor for the chemokines CCL1/SCYA1/I-309. May regulate monocyte chemotaxis and thymic cell line apoptosis. The chain is C-C chemokine receptor type 8 (CCR8) from Macaca mulatta (Rhesus macaque).